Here is a 275-residue protein sequence, read N- to C-terminus: Protein FAM210A (275 aa).

Residues K51–E100 are disordered. Composition is skewed to polar residues over residues Q56–K65 and I75–S95. The 113-residue stretch at D105–K217 folds into the DUF1279 domain. The helical transmembrane segment at V124–A144 threads the bilayer. The stretch at Q221–E275 forms a coiled coil.

It belongs to the FAM210 family.

The protein localises to the membrane. It localises to the mitochondrion. The protein resides in the cytoplasm. In terms of biological role, may play a role in the structure and strength of both muscle and bone. This chain is Protein FAM210A (fam210a), found in Xenopus laevis (African clawed frog).